Here is a 418-residue protein sequence, read N- to C-terminus: Tryptophan synthase beta chain (418 aa).

The segment covering 1-17 (MTSTLPNASTPDPSSLQ) has biased composition (polar residues). Residues 1–23 (MTSTLPNASTPDPSSLQPAVRPG) are disordered. Residue lysine 111 is modified to N6-(pyridoxal phosphate)lysine.

Belongs to the TrpB family. As to quaternary structure, tetramer of two alpha and two beta chains. The cofactor is pyridoxal 5'-phosphate.

It carries out the reaction (1S,2R)-1-C-(indol-3-yl)glycerol 3-phosphate + L-serine = D-glyceraldehyde 3-phosphate + L-tryptophan + H2O. It participates in amino-acid biosynthesis; L-tryptophan biosynthesis; L-tryptophan from chorismate: step 5/5. Functionally, the beta subunit is responsible for the synthesis of L-tryptophan from indole and L-serine. This chain is Tryptophan synthase beta chain, found in Synechococcus sp. (strain CC9605).